The primary structure comprises 176 residues: Mitochondrial inner membrane protein Mpv17 (176 aa).

The next 4 membrane-spanning stretches (helical) occupy residues 18-38 (VQVL…QQLV), 57-77 (LGCG…DHLI), 94-114 (GGFA…LNGM), and 131-151 (LITN…LVPL).

It belongs to the peroxisomal membrane protein PXMP2/4 family.

Its subcellular location is the mitochondrion inner membrane. In terms of biological role, non-selective channel that modulates the membrane potential under normal conditions and oxidative stress, and is involved in mitochondrial homeostasis. Involved in mitochondrial deoxynucleoside triphosphates (dNTP) pool homeostasis and mitochondrial DNA (mtDNA) maintenance. May be involved in the regulation of reactive oxygen species metabolism and the control of oxidative phosphorylation. The protein is Mitochondrial inner membrane protein Mpv17 of Rattus norvegicus (Rat).